The primary structure comprises 303 residues: Glycine--tRNA ligase alpha subunit (303 aa).

It belongs to the class-II aminoacyl-tRNA synthetase family. In terms of assembly, tetramer of two alpha and two beta subunits.

It is found in the cytoplasm. The catalysed reaction is tRNA(Gly) + glycine + ATP = glycyl-tRNA(Gly) + AMP + diphosphate. This chain is Glycine--tRNA ligase alpha subunit, found in Erwinia tasmaniensis (strain DSM 17950 / CFBP 7177 / CIP 109463 / NCPPB 4357 / Et1/99).